The primary structure comprises 421 residues: Exopolysaccharide production protein ExoF (421 aa).

A signal peptide spans methionine 1–serine 31.

The protein localises to the periplasm. It participates in glycan metabolism; exopolysaccharide biosynthesis. Functionally, involved in succinoglycan (EPS I) synthesis. Needed for the addition of the first sugar (galactose) to the isoprenoid carrier. The polypeptide is Exopolysaccharide production protein ExoF (exoF) (Rhizobium meliloti (strain 1021) (Ensifer meliloti)).